The primary structure comprises 386 residues: ATP phosphoribosyltransferase regulatory subunit (386 aa).

It belongs to the class-II aminoacyl-tRNA synthetase family. HisZ subfamily. As to quaternary structure, heteromultimer composed of HisG and HisZ subunits.

It is found in the cytoplasm. Its pathway is amino-acid biosynthesis; L-histidine biosynthesis; L-histidine from 5-phospho-alpha-D-ribose 1-diphosphate: step 1/9. Its function is as follows. Required for the first step of histidine biosynthesis. May allow the feedback regulation of ATP phosphoribosyltransferase activity by histidine. This Limosilactobacillus fermentum (strain NBRC 3956 / LMG 18251) (Lactobacillus fermentum) protein is ATP phosphoribosyltransferase regulatory subunit.